Reading from the N-terminus, the 267-residue chain is MTTGTVDGICYEVHGWPVAGREVVLLSSGLGGSAAFWAPQMKALTERWPVVTYDHRGTGRSVRALPPGPYSVDDMAQDMVKVMDALGLTKAHVVGHAAGGNAGLALALNHPDRLGKLVVVNGWSRPDPHIQRCFDTRIHLLNDTGIKAYVHAQPIFLYPADWISRNHARLMAEEAHHVAGFPPREVMLARINALLAFDIDARLEEIPHRVLVSASADDMLVPMSCSQRLAARLPNADFQQVAWGGHGFTVTDPETFNEGLIKFLEGA.

One can recognise an AB hydrolase-1 domain in the interval 23–139 (VVLLSSGLGG…IQRCFDTRIH (117 aa)).

The protein belongs to the AB hydrolase superfamily. Hydrolase RutD family.

It catalyses the reaction carbamate + 2 H(+) = NH4(+) + CO2. Involved in pyrimidine catabolism. May facilitate the hydrolysis of carbamate, a reaction that can also occur spontaneously. This Caulobacter segnis (strain ATCC 21756 / DSM 7131 / JCM 7823 / NBRC 15250 / LMG 17158 / TK0059) (Mycoplana segnis) protein is Putative carbamate hydrolase RutD.